Consider the following 175-residue polypeptide: Universal stress protein A-like protein (175 aa).

AMP contacts are provided by Ala11, Val12, Asn13, Ser26, Cys27, Val53, Gly131, Arg133, Thr145, Val146, and Ser147.

Belongs to the universal stress protein A family. In terms of assembly, homohexamer.

The polypeptide is Universal stress protein A-like protein (Arabidopsis thaliana (Mouse-ear cress)).